A 339-amino-acid chain; its full sequence is Biotin synthase (339 aa).

A Radical SAM core domain is found at 55 to 282; that stretch reads NAVQLSTLLS…KAVVRLSAGR (228 aa). Cys-70, Cys-74, and Cys-77 together coordinate [4Fe-4S] cluster. 4 residues coordinate [2Fe-2S] cluster: Cys-114, Cys-145, Cys-205, and Arg-277.

Belongs to the radical SAM superfamily. Biotin synthase family. Homodimer. The cofactor is [4Fe-4S] cluster. [2Fe-2S] cluster serves as cofactor.

It carries out the reaction (4R,5S)-dethiobiotin + (sulfur carrier)-SH + 2 reduced [2Fe-2S]-[ferredoxin] + 2 S-adenosyl-L-methionine = (sulfur carrier)-H + biotin + 2 5'-deoxyadenosine + 2 L-methionine + 2 oxidized [2Fe-2S]-[ferredoxin]. It participates in cofactor biosynthesis; biotin biosynthesis; biotin from 7,8-diaminononanoate: step 2/2. Catalyzes the conversion of dethiobiotin (DTB) to biotin by the insertion of a sulfur atom into dethiobiotin via a radical-based mechanism. In Burkholderia vietnamiensis (strain G4 / LMG 22486) (Burkholderia cepacia (strain R1808)), this protein is Biotin synthase.